The chain runs to 246 residues: Uridylate kinase (246 aa).

19 to 22 (KISG) is a binding site for ATP. Gly-61 contributes to the UMP binding site. The ATP site is built by Gly-62 and Arg-66. Residues Asp-81 and 142-149 (TGNPFFTT) contribute to the UMP site. The ATP site is built by Thr-169, Gln-170, Tyr-175, and Asp-178.

The protein belongs to the UMP kinase family. Homohexamer.

The protein resides in the cytoplasm. The enzyme catalyses UMP + ATP = UDP + ADP. It functions in the pathway pyrimidine metabolism; CTP biosynthesis via de novo pathway; UDP from UMP (UMPK route): step 1/1. Inhibited by UTP. Its function is as follows. Catalyzes the reversible phosphorylation of UMP to UDP. In Wolbachia sp. subsp. Brugia malayi (strain TRS), this protein is Uridylate kinase.